The primary structure comprises 374 residues: Carboxypeptidase O (374 aa).

An N-terminal signal peptide occupies residues Met1–Gly20. A Peptidase M14 domain is found at Ile49–Val344. Residues His108 and Glu111 each contribute to the Zn(2+) site. N-linked (GlcNAc...) asparagine glycosylation is found at Asn132, Asn174, and Asn187. His236 lines the Zn(2+) pocket. Asn251 is a glycosylation site (N-linked (GlcNAc...) asparagine). The active-site Proton donor/acceptor is Glu310. Residue Asp352 is the site of GPI-anchor amidated aspartate attachment. Positions Ser353–Leu374 are cleaved as a propeptide — removed in mature form.

It belongs to the peptidase M14 family. Zn(2+) is required as a cofactor. In terms of processing, N-glycosylated. Detected in enterocytes of the ileum.

It is found in the apical cell membrane. With respect to regulation, strongly inhibited by potato carboxypeptidase inhibitor, and the chelating agents EDTA and 1,10-phenanthroline. Also inhibited by compounds with multiple carboxylic acid groups such as citrate and succinate, and to a lesser exent the amino acids aspartate and glutamate. Not significantly inhibited by benzylsuccinic acid. Its function is as follows. Carboxypeptidase which preferentially cleaves C-terminal acidic residues from peptides and proteins. Can also cleave C-terminal hydrophobic amino acids, with a preference for small residues over large residues. This is Carboxypeptidase O from Homo sapiens (Human).